Here is a 72-residue protein sequence, read N- to C-terminus: Translation initiation factor IF-1 (72 aa).

Residues 2–72 (AKEDVIEIQG…TKGRITYRFK (71 aa)) enclose the S1-like domain.

This sequence belongs to the IF-1 family. As to quaternary structure, component of the 30S ribosomal translation pre-initiation complex which assembles on the 30S ribosome in the order IF-2 and IF-3, IF-1 and N-formylmethionyl-tRNA(fMet); mRNA recruitment can occur at any time during PIC assembly.

It is found in the cytoplasm. Functionally, one of the essential components for the initiation of protein synthesis. Stabilizes the binding of IF-2 and IF-3 on the 30S subunit to which N-formylmethionyl-tRNA(fMet) subsequently binds. Helps modulate mRNA selection, yielding the 30S pre-initiation complex (PIC). Upon addition of the 50S ribosomal subunit IF-1, IF-2 and IF-3 are released leaving the mature 70S translation initiation complex. The polypeptide is Translation initiation factor IF-1 (Lactiplantibacillus plantarum (strain ATCC BAA-793 / NCIMB 8826 / WCFS1) (Lactobacillus plantarum)).